The following is a 299-amino-acid chain: Tyrosine recombinase XerD (299 aa).

Residues 2–89 form the Core-binding (CB) domain; sequence ETVNNNLQQF…AIRSFHQFLL (88 aa). The 184-residue stretch at 110-293 folds into the Tyr recombinase domain; sequence RLPKALTIEE…TKTRMRDVYA (184 aa). Catalysis depends on residues Arg-150, Lys-174, His-245, Arg-248, and His-271. Tyr-280 functions as the O-(3'-phospho-DNA)-tyrosine intermediate in the catalytic mechanism.

Belongs to the 'phage' integrase family. XerD subfamily. In terms of assembly, forms a cyclic heterotetrameric complex composed of two molecules of XerC and two molecules of XerD.

Its subcellular location is the cytoplasm. In terms of biological role, site-specific tyrosine recombinase, which acts by catalyzing the cutting and rejoining of the recombining DNA molecules. The XerC-XerD complex is essential to convert dimers of the bacterial chromosome into monomers to permit their segregation at cell division. It also contributes to the segregational stability of plasmids. This Halalkalibacterium halodurans (strain ATCC BAA-125 / DSM 18197 / FERM 7344 / JCM 9153 / C-125) (Bacillus halodurans) protein is Tyrosine recombinase XerD.